A 470-amino-acid chain; its full sequence is ATP synthase subunit beta (470 aa).

157 to 164 (GGAGVGKT) contacts ATP.

It belongs to the ATPase alpha/beta chains family. In terms of assembly, F-type ATPases have 2 components, CF(1) - the catalytic core - and CF(0) - the membrane proton channel. CF(1) has five subunits: alpha(3), beta(3), gamma(1), delta(1), epsilon(1). CF(0) has three main subunits: a(1), b(2) and c(9-12). The alpha and beta chains form an alternating ring which encloses part of the gamma chain. CF(1) is attached to CF(0) by a central stalk formed by the gamma and epsilon chains, while a peripheral stalk is formed by the delta and b chains.

It is found in the cell inner membrane. The catalysed reaction is ATP + H2O + 4 H(+)(in) = ADP + phosphate + 5 H(+)(out). Functionally, produces ATP from ADP in the presence of a proton gradient across the membrane. The catalytic sites are hosted primarily by the beta subunits. This Geobacter sulfurreducens (strain ATCC 51573 / DSM 12127 / PCA) protein is ATP synthase subunit beta.